The primary structure comprises 728 residues: U-box domain-containing protein 4 (728 aa).

In terms of domain architecture, U-box spans 296 to 370; it reads SVPKEFSCPI…SQWCGVYGLQ (75 aa). ARM repeat units follow at residues 441–483 and 526–568; these read GAIP…EQEG and GAVE…ESCA.

The catalysed reaction is S-ubiquitinyl-[E2 ubiquitin-conjugating enzyme]-L-cysteine + [acceptor protein]-L-lysine = [E2 ubiquitin-conjugating enzyme]-L-cysteine + N(6)-ubiquitinyl-[acceptor protein]-L-lysine.. The protein operates within protein modification; protein ubiquitination. Functionally, possesses E3 ubiquitin-protein ligase in vitro. In Oryza sativa subsp. japonica (Rice), this protein is U-box domain-containing protein 4 (PUB4).